Reading from the N-terminus, the 341-residue chain is MEPAFGEVNQLGGVFVNGRPLPNAIRLRIVELAQLGIRPCDISRQLRVSHGCVSKILARYNETGSILPGAIGGSKPRVTTPTVVKHIRTYKQRDPGIFAWEIRDRLLADGVCDKYNVPSVSSISRILRNKIGNLAQQGHYDSYKQHQPAPQPALPYNHIYSYPSPITAAAAKVPTPPGVPAIPGSVAMPRTWPSSHSVTDILGIRSITDQVSDSSPYHSPKVEEWSSLGRNNFPAAAPHAVNGLEKGALEQETKYSQAPNGLPAVGSFVSASSMAPYPTPAQVSPYMTYSAAPSGYVAGHGWQHAGSTPLSPHNCDIPASLAFKGMQAAREGSHSVTASAL.

Residues 4 to 130 constitute a DNA-binding region (paired); the sequence is AFGEVNQLGG…SSISRILRNK (127 aa). The segment at 7-63 is PAI subdomain; the sequence is EVNQLGGVFVNGRPLPNAIRLRIVELAQLGIRPCDISRQLRVSHGCVSKILARYNET. The interval 82-130 is RED subdomain; that stretch reads TVVKHIRTYKQRDPGIFAWEIRDRLLADGVCDKYNVPSVSSISRILRNK. The interaction with KDM5B stretch occupies residues 168-189; sequence AAAAKVPTPPGVPAIPGSVAMP.

In terms of assembly, interacts with KDM5B.

It is found in the nucleus. In terms of biological role, transcription factor required for normal development of thymus, parathyroid glands, ultimobranchial bodies, teeth, skeletal elements of skull and larynx as well as distal limbs. This is Paired box protein Pax-9 (PAX9) from Leontopithecus rosalia (Golden lion tamarin).